A 778-amino-acid chain; its full sequence is High affinity nerve growth factor receptor (778 aa).

An N-terminal signal peptide occupies residues 1 to 14 (WGCLRLPLPLCHAL). Residues 15–400 (AAHCRCPASH…VETADEHTFG (386 aa)) are Extracellular-facing. C18 and C20 are disulfide-bonded. 2 LRR repeats span residues 71-92 (DLRH…AFQD) and 95-116 (RLSH…TFQH). 11 N-linked (GlcNAc...) asparagine glycosylation sites follow: N100, N130, N143, N151, N194, N234, N262, N300, N320, N340, and N384. An LRRCT domain is found at 127-175 (NPFNCSCGIRWLQLWQNGSRAELGNQSLLCWEGSMLVALDSHPLHDCEP). C133 and C173 are joined by a disulfide. Ig-like C2-type domains are found at residues 175–262 (PPTA…VMLN) and 281–347 (WCIP…VVQN). C282 and C327 are joined by a disulfide. The chain crosses the membrane as a helical span at residues 401 to 421 (VSVAVALAVFASLFLSVMLIA). Residues 422-778 (LNKCGHRSKF…TPPIYLDILG (357 aa)) are Cytoplasmic-facing. Y479 carries the post-translational modification Phosphotyrosine; by autocatalysis. Residues 493–763 (IVLKWELGEG…RSIQDIHSRL (271 aa)) enclose the Protein kinase domain. Residues 499 to 507 (LGEGAFGKV) and K527 contribute to the ATP site. Residue D633 is the Proton acceptor of the active site. 4 positions are modified to phosphotyrosine; by autocatalysis: Y659, Y663, Y664, and Y773.

This sequence belongs to the protein kinase superfamily. Tyr protein kinase family. Insulin receptor subfamily. Exists in a dynamic equilibrium between monomeric (low affinity) and dimeric (high affinity) structures. Homodimerization is induced by NGF dimer binding. Interacts with PTPRS. In terms of processing, ligand-mediated auto-phosphorylation. Ubiquitinated. Undergoes polyubiquitination upon activation; regulated by NGFR. Ubiquitination regulates the internalization of the receptor.

It is found in the cell membrane. The protein resides in the early endosome membrane. The protein localises to the late endosome membrane. Its subcellular location is the recycling endosome membrane. It catalyses the reaction L-tyrosyl-[protein] + ATP = O-phospho-L-tyrosyl-[protein] + ADP + H(+). The pro-survival signaling effect of NTRK1 in neurons requires its endocytosis into signaling early endosomes and its retrograde axonal transport. In terms of biological role, receptor tyrosine kinase involved in the development and the maturation of the central and peripheral nervous systems through regulation of proliferation, differentiation and survival of sympathetic and nervous neurons. High affinity receptor for NGF which is its primary ligand, it can also bind and be activated by NTF3/neurotrophin-3. Upon dimeric NGF ligand-binding, undergoes homodimerization, autophosphorylation and activation. Recruits, phosphorylates and/or activates several downstream effectors that regulate distinct overlapping signaling cascades driving cell survival and differentiation. In absence of ligand and activation, may promote cell death, making the survival of neurons dependent on trophic factors. The protein is High affinity nerve growth factor receptor (NTRK1) of Gallus gallus (Chicken).